The chain runs to 62 residues: UPF0434 protein SPO3421 (62 aa).

This sequence belongs to the UPF0434 family.

The polypeptide is UPF0434 protein SPO3421 (Ruegeria pomeroyi (strain ATCC 700808 / DSM 15171 / DSS-3) (Silicibacter pomeroyi)).